A 263-amino-acid chain; its full sequence is Small ribosomal subunit protein uS3 (263 aa).

Positions 40-108 (IRNYLFKKFH…HIKVDVDVLE (69 aa)) constitute a KH type-2 domain. The disordered stretch occupies residues 224–263 (KPKGSEANHQRRNSNKSKDYRDNKNKQFNKNHQNQQPAKE). The span at 239 to 248 (KSKDYRDNKN) shows a compositional bias: basic and acidic residues. The segment covering 249-263 (KQFNKNHQNQQPAKE) has biased composition (low complexity).

It belongs to the universal ribosomal protein uS3 family. As to quaternary structure, part of the 30S ribosomal subunit. Forms a tight complex with proteins S10 and S14.

In terms of biological role, binds the lower part of the 30S subunit head. Binds mRNA in the 70S ribosome, positioning it for translation. The protein is Small ribosomal subunit protein uS3 of Mycoplasmoides gallisepticum (strain R(low / passage 15 / clone 2)) (Mycoplasma gallisepticum).